Here is a 439-residue protein sequence, read N- to C-terminus: Tol-Pal system protein TolB (439 aa).

An N-terminal signal peptide occupies residues 1–22; it reads MKKPLRWLAALTVLLLPLSALA.

The protein belongs to the TolB family. As to quaternary structure, the Tol-Pal system is composed of five core proteins: the inner membrane proteins TolA, TolQ and TolR, the periplasmic protein TolB and the outer membrane protein Pal. They form a network linking the inner and outer membranes and the peptidoglycan layer.

The protein resides in the periplasm. Part of the Tol-Pal system, which plays a role in outer membrane invagination during cell division and is important for maintaining outer membrane integrity. In Xanthomonas oryzae pv. oryzae (strain PXO99A), this protein is Tol-Pal system protein TolB.